A 372-amino-acid polypeptide reads, in one-letter code: Coxsackievirus and adenovirus receptor homolog (372 aa).

The signal sequence occupies residues 1-22 (MDMRTSFLCVTYVILLTGSACG). Ig-like C2-type domains are found at residues 23–140 (LQIT…YLLT) and 130–234 (PGIA…VTIT). The Extracellular segment spans residues 23 to 241 (LQITSTGQTS…TITQPPNTAG (219 aa)). 3 disulfide bridges follow: Cys45–Cys124, Cys150–Cys227, and Cys166–Cys216. A glycan (N-linked (GlcNAc...) asparagine) is linked at Asn205. The helical transmembrane segment at 242 to 262 (IIAGVIICILLLLILLALILF) threads the bilayer. Topologically, residues 263-372 (CCCRARHKKK…PAQNKDGSIV (110 aa)) are cytoplasmic. The segment at 286-352 (PPPKSRVSTA…PPSRMAGPNL (67 aa)) is disordered. Residues 291-317 (RVSTARSFTSVGSQRSSLGSMSPSNLH) show a composition bias toward polar residues. A compositionally biased stretch (basic and acidic residues) spans 318-336 (EYSKPQYDKIPSEEYDRPP).

As to quaternary structure, monomer. Probably homodimer formed by 2 molecules on adjacent cells.

It localises to the cell membrane. The protein resides in the basolateral cell membrane. It is found in the cell junction. The protein localises to the tight junction. Its subcellular location is the adherens junction. In terms of biological role, may function as a homophilic cell adhesion molecule and be essential for tight junction integrity. May also be involved in transepithelial migration of leukocytes through adhesive interactions with jaml. The interaction between both receptors may also mediate the activation of gamma-delta T-cells, a subpopulation of T-cells residing in epithelia and involved in tissue homeostasis and repair. This chain is Coxsackievirus and adenovirus receptor homolog (cxadr), found in Danio rerio (Zebrafish).